Reading from the N-terminus, the 187-residue chain is MNLQHHFLIAMPALQDPLFRRSVVYICEYNNEGAMGLIINKPLENLQVEGVLQKLKITPEPRDPAIRLDKPVFLGGPLAEDRGFILHTPPDAFSSSIRISDNTVITTSRDVLETLGTAEQPDDVLVALGYSSWEKGQLEEEILENAWLTAPADLNILFRTPIADRWREAAKLIGIDIHTMPGEAGHA.

Belongs to the UPF0301 (AlgH) family.

In Cronobacter sakazakii (strain ATCC BAA-894) (Enterobacter sakazakii), this protein is UPF0301 protein ESA_00394.